A 570-amino-acid polypeptide reads, in one-letter code: Peptidyl-prolyl cis-trans isomerase FKBP9 (570 aa).

The first 24 residues, 1–24, serve as a signal peptide directing secretion; sequence MAFRGWRPPPPPLLLLLLWVTGQA. PPIase FKBP-type domains follow at residues 54–142, 166–254, 278–365, and 389–477; these read GDFV…MDIW, SDFV…LDLH, GDFL…IDFH, and GDYL…LELV. 4 N-linked (GlcNAc...) asparagine glycosylation sites follow: Asn-174, Asn-286, Asn-302, and Asn-397. 2 EF-hand domains span residues 488–523 and 533–568; these read WNGE…QVAS and DAEL…AKHD. Ca(2+) contacts are provided by Asp-501, Asp-503, Asn-505, Glu-507, Glu-512, Asp-546, Asn-548, Asp-550, Lys-552, and Glu-557. The Prevents secretion from ER signature appears at 567–570; it reads HDEL.

Post-translationally, phosphorylated.

The protein resides in the endoplasmic reticulum. It carries out the reaction [protein]-peptidylproline (omega=180) = [protein]-peptidylproline (omega=0). Inhibited by FK506. Its function is as follows. PPIases accelerate the folding of proteins during protein synthesis. The polypeptide is Peptidyl-prolyl cis-trans isomerase FKBP9 (FKBP9) (Homo sapiens (Human)).